Consider the following 551-residue polypeptide: Cytochrome c oxidase subunit 1 homolog (551 aa).

3 helical membrane passes run 14–34 (GELG…VVAA), 40–60 (EYAF…FVIG), and 88–108 (VGTL…VIIA). Position 132 (His-132) interacts with heme b. The next 8 membrane-spanning stretches (helical) occupy residues 133 to 153 (TSAV…FYVV), 169 to 189 (FVVL…LLGI), 202 to 222 (ADLW…GTVL), 229 to 249 (IYVA…LHLG), 280 to 300 (GHNA…YYFI), 313 to 333 (LSIV…PHHL), 345 to 365 (LGMT…INGL), and 383 to 403 (MMVV…MMSV). 3 residues coordinate Cu cation: His-281, His-331, and His-332. Residues His-419 and His-421 each coordinate heme b. Helical transmembrane passes span 424 to 444 (ALGW…PWLW), 459 to 479 (FWVS…AGIL), and 513 to 533 (IGGI…FMTI).

It belongs to the heme-copper respiratory oxidase family. It depends on Cu(2+) as a cofactor. Requires heme b as cofactor.

Its subcellular location is the cell membrane. The catalysed reaction is 4 Fe(II)-[cytochrome c] + O2 + 8 H(+)(in) = 4 Fe(III)-[cytochrome c] + 2 H2O + 4 H(+)(out). It functions in the pathway energy metabolism; oxidative phosphorylation. Cytochrome c oxidase is the component of the respiratory chain that catalyzes the reduction of oxygen to water. Subunits 1-3 form the functional core of the enzyme complex. Co I is the catalytic subunit of the enzyme. Electrons originating in cytochrome c or a quinol are transferred to the bimetallic center formed by a high-spin heme and copper B. In Azorhizobium caulinodans (strain ATCC 43989 / DSM 5975 / JCM 20966 / LMG 6465 / NBRC 14845 / NCIMB 13405 / ORS 571), this protein is Cytochrome c oxidase subunit 1 homolog (fixN).